Here is a 524-residue protein sequence, read N- to C-terminus: Acetyl-CoA hydrolase (524 aa).

CoA is bound at residue 275–279 (GIGNI). Glu-300 serves as the catalytic 5-glutamyl coenzyme A thioester intermediate. Residues Asn-390 and Gly-394 each contribute to the CoA site.

It belongs to the acetyl-CoA hydrolase/transferase family.

It is found in the cytoplasm. It catalyses the reaction acetyl-CoA + H2O = acetate + CoA + H(+). Presumably involved in regulating the intracellular acetyl-CoA pool for fatty acid and cholesterol synthesis and fatty acid oxidation. The chain is Acetyl-CoA hydrolase (ACH1) from Candida albicans (strain SC5314 / ATCC MYA-2876) (Yeast).